The sequence spans 526 residues: Peptide chain release factor 3 (526 aa).

Residues 9–277 (DKRRTFAIIS…GIVEWAPKPL (269 aa)) enclose the tr-type G domain. GTP is bound by residues 18-25 (SHPDAGKT), 86-90 (DTPGH), and 140-143 (NKLD).

The protein belongs to the TRAFAC class translation factor GTPase superfamily. Classic translation factor GTPase family. PrfC subfamily.

It localises to the cytoplasm. Its function is as follows. Increases the formation of ribosomal termination complexes and stimulates activities of RF-1 and RF-2. It binds guanine nucleotides and has strong preference for UGA stop codons. It may interact directly with the ribosome. The stimulation of RF-1 and RF-2 is significantly reduced by GTP and GDP, but not by GMP. The polypeptide is Peptide chain release factor 3 (Shewanella sp. (strain ANA-3)).